Consider the following 209-residue polypeptide: DNA transformation protein TfoX1 (209 aa).

It belongs to the Sxy/TfoX family.

In terms of biological role, required for DNA transformation jointly with TfoY (tfoX2). This Aliivibrio fischeri (strain ATCC 700601 / ES114) (Vibrio fischeri) protein is DNA transformation protein TfoX1.